Consider the following 208-residue polypeptide: Putative 3-methyladenine DNA glycosylase (208 aa).

Belongs to the DNA glycosylase MPG family.

This Lactobacillus johnsonii (strain CNCM I-12250 / La1 / NCC 533) protein is Putative 3-methyladenine DNA glycosylase.